The sequence spans 255 residues: Triosephosphate isomerase (255 aa).

9–11 contributes to the substrate binding site; sequence NWK. His-95 functions as the Electrophile in the catalytic mechanism. Glu-167 acts as the Proton acceptor in catalysis. Substrate is bound by residues Gly-173, Ser-212, and 233–234; that span reads GG.

The protein belongs to the triosephosphate isomerase family. In terms of assembly, homodimer.

The protein localises to the cytoplasm. The enzyme catalyses D-glyceraldehyde 3-phosphate = dihydroxyacetone phosphate. The protein operates within carbohydrate biosynthesis; gluconeogenesis. It participates in carbohydrate degradation; glycolysis; D-glyceraldehyde 3-phosphate from glycerone phosphate: step 1/1. Functionally, involved in the gluconeogenesis. Catalyzes stereospecifically the conversion of dihydroxyacetone phosphate (DHAP) to D-glyceraldehyde-3-phosphate (G3P). The polypeptide is Triosephosphate isomerase (Klebsiella pneumoniae).